The chain runs to 429 residues: Enolase (429 aa).

Position 163 (Gln-163) interacts with (2R)-2-phosphoglycerate. The active-site Proton donor is Glu-205. The Mg(2+) site is built by Asp-242, Glu-286, and Asp-313. Residues Lys-338, Arg-367, Ser-368, and Lys-389 each contribute to the (2R)-2-phosphoglycerate site. The Proton acceptor role is filled by Lys-338.

Belongs to the enolase family. The cofactor is Mg(2+).

It is found in the cytoplasm. The protein localises to the secreted. It localises to the cell surface. It carries out the reaction (2R)-2-phosphoglycerate = phosphoenolpyruvate + H2O. The protein operates within carbohydrate degradation; glycolysis; pyruvate from D-glyceraldehyde 3-phosphate: step 4/5. Its function is as follows. Catalyzes the reversible conversion of 2-phosphoglycerate (2-PG) into phosphoenolpyruvate (PEP). It is essential for the degradation of carbohydrates via glycolysis. The chain is Enolase from Geotalea uraniireducens (strain Rf4) (Geobacter uraniireducens).